Here is a 528-residue protein sequence, read N- to C-terminus: Light-independent protochlorophyllide reductase subunit B (528 aa).

Asp-36 contacts [4Fe-4S] cluster. Catalysis depends on Asp-274, which acts as the Proton donor. Residue 409–410 (GL) coordinates substrate. Residues 429–471 (GPSHHGGHAPKPMHDAPAASAAAGAEASMAEETAAPSQDAPAA) are disordered. Residues 444-465 (APAASAAAGAEASMAEETAAPS) are compositionally biased toward low complexity.

Belongs to the ChlB/BchB/BchZ family. In terms of assembly, protochlorophyllide reductase is composed of three subunits; BchL, BchN and BchB. Forms a heterotetramer of two BchB and two BchN subunits. Requires [4Fe-4S] cluster as cofactor.

The catalysed reaction is chlorophyllide a + oxidized 2[4Fe-4S]-[ferredoxin] + 2 ADP + 2 phosphate = protochlorophyllide a + reduced 2[4Fe-4S]-[ferredoxin] + 2 ATP + 2 H2O. It participates in porphyrin-containing compound metabolism; bacteriochlorophyll biosynthesis (light-independent). Functionally, component of the dark-operative protochlorophyllide reductase (DPOR) that uses Mg-ATP and reduced ferredoxin to reduce ring D of protochlorophyllide (Pchlide) to form chlorophyllide a (Chlide). This reaction is light-independent. The NB-protein (BchN-BchB) is the catalytic component of the complex. This Dinoroseobacter shibae (strain DSM 16493 / NCIMB 14021 / DFL 12) protein is Light-independent protochlorophyllide reductase subunit B.